The following is a 1165-amino-acid chain: Chitin synthase 3 (1165 aa).

The Cytoplasmic segment spans residues 1–170; sequence MTGLNGDDPD…ETNDTLSFWQ (170 aa). Disordered stretches follow at residues 19–53 and 74–97; these read DEESLLRSRHSVGSGAPHRQGSLVRPERSRLNNPD and PSSTGVNPNATRRSGSLRSKGSVR. Residues 74–92 show a composition bias toward polar residues; sequence PSSTGVNPNATRRSGSLRS. Lysine 136 is covalently cross-linked (Glycyl lysine isopeptide (Lys-Gly) (interchain with G-Cter in ubiquitin)). A helical membrane pass occupies residues 171–191; sequence MYCYFITFWAPAPILAFCGMP. The Extracellular segment spans residues 192 to 340; it reads KKERQMAWRE…PNFTVENYAG (149 aa). N-linked (GlcNAc...) asparagine glycosylation is found at asparagine 303 and asparagine 332. Residues 341-354 form a helical membrane-spanning segment; it reads WNCHTSKEDRDAFY. Residues 355-452 are Cytoplasmic-facing; it reads GLKSKADVYF…SKTVGCIASD (98 aa). A helical transmembrane segment spans residues 453-473; that stretch reads VVLYVSLVFILSVVIIKFIIA. Over 474–891 the chain is Extracellular; the sequence is CYFRWTVARK…EYYISHHQAK (418 aa). Serine 537 carries the post-translational modification Phosphoserine. Threonine 538 is modified (phosphothreonine). A helical membrane pass occupies residues 892–910; it reads AFESVFGSVTCLPGCFSMY. The Cytoplasmic portion of the chain corresponds to 911 to 1029; sequence RIKSPKGSDG…SMQFVIGIEL (119 aa). The helical transmembrane segment at 1030-1050 threads the bilayer; sequence IGTMVLPLAICFTIYVIIFAI. Residues 1051 to 1055 are Extracellular-facing; sequence VSKPT. The helical transmembrane segment at 1056–1076 threads the bilayer; sequence PVITLVLLAIILGLPGLIVVI. Residues 1077 to 1165 lie on the Cytoplasmic side of the membrane; the sequence is TATRWSYLWW…RKEESDSFVA (89 aa).

The protein belongs to the chitin synthase family. Class IV subfamily. Homodimer. May form higher order oligomers. Seems to interact with BNI4 and SKT5 which link CHS3 to septins. Post-translationally, glycosylated. In terms of processing, palmitoylated by PFA4; required for proper export from the ER.

The protein resides in the cell membrane. The protein localises to the bud neck. It is found in the cytoplasmic vesicle membrane. It catalyses the reaction [(1-&gt;4)-N-acetyl-beta-D-glucosaminyl](n) + UDP-N-acetyl-alpha-D-glucosamine = [(1-&gt;4)-N-acetyl-beta-D-glucosaminyl](n+1) + UDP + H(+). In terms of biological role, polymerizes chitin, a structural polymer of the cell wall and septum, by transferring the sugar moiety of UDP-GlcNAc to the non-reducing end of the growing chitin polymer. Appears to be responsible for synthesis of the majority of the chitin found in the cell wall periphery. It is involved in the synthesis of the chitin ring that forms in the cell wall just before bud emergence. This ring remains at the base of the bud as the bud grows and ultimately forms part of the bud scar marking the division site on the mother cell. Also catalyzes the synthesis of chitin laid down during mating and spore cell-wall synthesis. This is Chitin synthase 3 from Saccharomyces cerevisiae (strain ATCC 204508 / S288c) (Baker's yeast).